The sequence spans 506 residues: Cationic amino acid transporter 8 (506 aa).

N-linked (GlcNAc...) asparagine glycans are attached at residues N2 and N5. The chain crosses the membrane as a helical span at residues 38 to 58 (FYLLLIIIIYTATSACIYFDW). N75 is a glycosylation site (N-linked (GlcNAc...) asparagine). The next 5 helical transmembrane spans lie at 93 to 113 (NLYP…GFLY), 116 to 136 (IGPK…WIFL), 147 to 167 (LIGF…ILTV), 174 to 194 (ISTF…AVPA), and 211 to 231 (ICYG…TFLL). N-linked (GlcNAc...) asparagine glycosylation occurs at N277. The helical transmembrane segment at 302–322 (ILLFFKVLLSYPSICIIVYFI) threads the bilayer. N-linked (GlcNAc...) asparagine glycans are attached at residues N325 and N342. 4 consecutive transmembrane segments (helical) span residues 344–364 (SIIN…IIFG), 372–392 (AAII…TALI), 399–419 (LISA…IYCF), and 427–447 (VVFG…SLFC). N-linked (GlcNAc...) asparagine glycans are attached at residues N453 and N456. A helical transmembrane segment spans residues 466-486 (TISILLAISFIIMFLPLSILY).

It belongs to the SLC43A transporter (TC 2.A.1.44) family.

The protein localises to the cell membrane. Functionally, cationic amino acid transporter which transports L-arginine, L-lysine and, to a lesser extent, L-histidine and ornithine. Plays an essential role in gametogenesis. In Plasmodium berghei (strain Anka), this protein is Cationic amino acid transporter 8.